The chain runs to 99 residues: Aspartyl/glutamyl-tRNA(Asn/Gln) amidotransferase subunit C (99 aa).

The protein belongs to the GatC family. In terms of assembly, heterotrimer of A, B and C subunits.

It carries out the reaction L-glutamyl-tRNA(Gln) + L-glutamine + ATP + H2O = L-glutaminyl-tRNA(Gln) + L-glutamate + ADP + phosphate + H(+). The catalysed reaction is L-aspartyl-tRNA(Asn) + L-glutamine + ATP + H2O = L-asparaginyl-tRNA(Asn) + L-glutamate + ADP + phosphate + 2 H(+). Allows the formation of correctly charged Asn-tRNA(Asn) or Gln-tRNA(Gln) through the transamidation of misacylated Asp-tRNA(Asn) or Glu-tRNA(Gln) in organisms which lack either or both of asparaginyl-tRNA or glutaminyl-tRNA synthetases. The reaction takes place in the presence of glutamine and ATP through an activated phospho-Asp-tRNA(Asn) or phospho-Glu-tRNA(Gln). The polypeptide is Aspartyl/glutamyl-tRNA(Asn/Gln) amidotransferase subunit C (Kineococcus radiotolerans (strain ATCC BAA-149 / DSM 14245 / SRS30216)).